A 545-amino-acid polypeptide reads, in one-letter code: Glucose-6-phosphate isomerase (545 aa).

The active-site Proton donor is glutamate 351. Residues histidine 382 and lysine 510 contribute to the active site.

It belongs to the GPI family.

The protein resides in the cytoplasm. It catalyses the reaction alpha-D-glucose 6-phosphate = beta-D-fructose 6-phosphate. It functions in the pathway carbohydrate biosynthesis; gluconeogenesis. The protein operates within carbohydrate degradation; glycolysis; D-glyceraldehyde 3-phosphate and glycerone phosphate from D-glucose: step 2/4. Its function is as follows. Catalyzes the reversible isomerization of glucose-6-phosphate to fructose-6-phosphate. In Shewanella baltica (strain OS155 / ATCC BAA-1091), this protein is Glucose-6-phosphate isomerase.